A 1040-amino-acid chain; its full sequence is Protocadherin-10 (1040 aa).

Residues 1–18 (MIVLLLFALLWMVEGVFS) form the signal peptide. 6 Cadherin domains span residues 19–122 (QLHY…PPSF), 123–250 (PEPD…VPAF), 251–358 (DQPV…APEI), 359–463 (SFST…APRF), 464–574 (SQPV…APAI), and 582–690 (NGTP…GGGG). The Extracellular segment spans residues 19-715 (QLHYTVQEEQ…GGGETSLDLT (697 aa)). The span at 207–223 (GGGGGVGEGGGGGGGAG) shows a compositional bias: gly residues. The tract at residues 207 to 228 (GGGGGVGEGGGGGGGAGLPPQQ) is disordered. Asn273 carries an N-linked (GlcNAc...) asparagine glycan. N-linked (GlcNAc...) asparagine glycosylation occurs at Asn557. Residues 686 to 697 (QGGGGSGGGGSG) show a composition bias toward gly residues. The disordered stretch occupies residues 686–708 (QGGGGSGGGGSGEHQRPSRSGGG). Residues 716 to 736 (LILIIALGSVSFIFLLAMIVL) form a helical membrane-spanning segment. Over 737–1040 (AVRCQKEKKL…PPYLTRKRIC (304 aa)) the chain is Cytoplasmic. The interval 899–927 (AFQEADIVSSKDSGHGDSEQGDSDHDATN) is disordered. Positions 910–926 (DSGHGDSEQGDSDHDAT) are enriched in basic and acidic residues.

In terms of tissue distribution, moderately expressed in all regions of the brain examined, as well as in testis and ovary, and low expression in all other tissues tested.

It is found in the cell membrane. Functionally, potential calcium-dependent cell-adhesion protein. Its function is as follows. (Microbial infection) Acts as a receptor for Western equine encephalitis virus. This Homo sapiens (Human) protein is Protocadherin-10 (PCDH10).